The chain runs to 178 residues: UPF0228 protein MA_4223 (178 aa).

It belongs to the UPF0228 family.

The polypeptide is UPF0228 protein MA_4223 (Methanosarcina acetivorans (strain ATCC 35395 / DSM 2834 / JCM 12185 / C2A)).